A 642-amino-acid polypeptide reads, in one-letter code: Bifunctional protein glk (642 aa).

The glucokinase stretch occupies residues 1 to 340 (MSTGAQSKAV…QLSNRSGGAS (340 aa)). 23 to 28 (ADVGGT) serves as a coordination point for ATP. The 77-residue stretch at 341–417 (SAVFERIRQM…LKLATGLTGT (77 aa)) folds into the HTH rpiR-type domain. The segment at 341–642 (SAVFERIRQM…SPAAKDVARD (302 aa)) is putative HTH-type transcriptional regulator. Positions 377–396 (IVDIARKADVSQPTVIRFCR) form a DNA-binding region, H-T-H motif. Positions 461 to 600 (AIEILNGARR…AVGVAIRRAS (140 aa)) constitute an SIS domain. The chain crosses the membrane as a helical span at residues 576-596 (SMISRILHLLMIDILAVGVAI).

It in the N-terminal section; belongs to the bacterial glucokinase family.

It is found in the membrane. The enzyme catalyses D-glucose + ATP = D-glucose 6-phosphate + ADP + H(+). The protein is Bifunctional protein glk (glk) of Burkholderia orbicola (strain AU 1054).